A 67-amino-acid polypeptide reads, in one-letter code: Large ribosomal subunit protein bL31 (67 aa).

This sequence belongs to the bacterial ribosomal protein bL31 family. Type A subfamily. Part of the 50S ribosomal subunit.

In terms of biological role, binds the 23S rRNA. This is Large ribosomal subunit protein bL31 from Helicobacter acinonychis (strain Sheeba).